Consider the following 533-residue polypeptide: Putative phosphate permease HP_1491 (533 aa).

The next 12 helical transmembrane spans lie at 23-43 (IALA…FGQA), 47-67 (GLLL…IGAN), 81-101 (AISM…GAII), 129-149 (VMLA…LIGA), 156-176 (SVVG…AVNW), 182-202 (IVAS…FFLM), 221-241 (VVPY…IVKV), 248-268 (LNFE…FILF), 286-306 (INEL…FAHG), 338-358 (VPLW…SLYG), 372-392 (LDKM…LLAS), and 509-529 (LVTV…LGFI).

This sequence belongs to the inorganic phosphate transporter (PiT) (TC 2.A.20) family.

The protein localises to the cell membrane. Potential transporter for phosphate. This chain is Putative phosphate permease HP_1491, found in Helicobacter pylori (strain ATCC 700392 / 26695) (Campylobacter pylori).